The following is a 541-amino-acid chain: 2-isopropylmalate synthase (541 aa).

The Pyruvate carboxyltransferase domain maps to valine 8–tyrosine 284. Positions 17, 208, 210, and 244 each coordinate Mn(2+). The segment at arginine 408–serine 541 is regulatory domain.

Belongs to the alpha-IPM synthase/homocitrate synthase family. LeuA type 1 subfamily. As to quaternary structure, homodimer. Mn(2+) serves as cofactor.

Its subcellular location is the cytoplasm. The enzyme catalyses 3-methyl-2-oxobutanoate + acetyl-CoA + H2O = (2S)-2-isopropylmalate + CoA + H(+). It participates in amino-acid biosynthesis; L-leucine biosynthesis; L-leucine from 3-methyl-2-oxobutanoate: step 1/4. In terms of biological role, catalyzes the condensation of the acetyl group of acetyl-CoA with 3-methyl-2-oxobutanoate (2-ketoisovalerate) to form 3-carboxy-3-hydroxy-4-methylpentanoate (2-isopropylmalate). The chain is 2-isopropylmalate synthase from Trichodesmium erythraeum (strain IMS101).